We begin with the raw amino-acid sequence, 104 residues long: UPF0213 protein ORF82 (104 aa).

Residues 7–83 (KVWCVYIVRR…KRKRGKYFKL (77 aa)) enclose the GIY-YIG domain.

Belongs to the UPF0213 family.

The protein is UPF0213 protein ORF82 of Orgyia pseudotsugata (Douglas-fir tussock moth).